Here is a 476-residue protein sequence, read N- to C-terminus: Acyl-lipid omega-13 desaturase (476 aa).

Residues 10 to 75 (GPALPSIPHQ…HLRVLERFRV (66 aa)) form the Cytochrome b5 heme-binding domain. Heme contacts are provided by His37 and His60. 2 helical membrane passes run 146 to 166 (PFVILHCLHVVGLIWSMKLWW) and 168 to 188 (GAFISAFILPYFLWVLCAAMV). Positions 189–193 (HDGGH) match the Histidine box-1 motif. The Histidine box-2 motif lies at 224–229 (HNILHH). The next 3 helical transmembrane spans lie at 267–287 (FFSHLIMYNFAHIGLTMISPL), 315–335 (YHSTVMLQLVTVGAFYITPFL), and 343–363 (LLLTLLPTFMMSVAFMVIAQV). Positions 410–414 (QSLHH) match the Histidine box-3 motif.

This sequence belongs to the fatty acid desaturase type 1 family.

It is found in the membrane. The catalysed reaction is a (9Z,12Z)-octadecadienoyl-containing glycerolipid + 2 Fe(II)-[cytochrome b5] + O2 + 2 H(+) = a (5Z,9Z,12Z)-octadecatrienoyl-containing glycerolipid + 2 Fe(III)-[cytochrome b5] + 2 H2O. The enzyme catalyses (9Z,12Z,15Z)-octadecatrienoyl-containing glycerolipid + 2 Fe(II)-[cytochrome b5] + O2 + 2 H(+) = a (5Z,9Z,12Z,15Z)-octadecatetraenoyl-containing glycerolipid + 2 Fe(III)-[cytochrome b5] + 2 H2O. It functions in the pathway lipid metabolism; polyunsaturated fatty acid biosynthesis. Its function is as follows. Front-end desaturase having a omega-13 desaturase activity for omega-9 unsaturated C18/C20 fatty acids. Strong substrate preferences for linoleic acid and alpha-linolenic acid for the production of pinolenic and coniferonic acids respectively. No desaturase activity for dihomo gamma-linolenic acid and eicosatertraenoic acid. The polypeptide is Acyl-lipid omega-13 desaturase (Chlamydomonas reinhardtii (Chlamydomonas smithii)).